Consider the following 191-residue polypeptide: Elongation factor P (191 aa).

Belongs to the elongation factor P family.

The protein resides in the cytoplasm. Its pathway is protein biosynthesis; polypeptide chain elongation. Involved in peptide bond synthesis. Stimulates efficient translation and peptide-bond synthesis on native or reconstituted 70S ribosomes in vitro. Probably functions indirectly by altering the affinity of the ribosome for aminoacyl-tRNA, thus increasing their reactivity as acceptors for peptidyl transferase. The chain is Elongation factor P from Janthinobacterium sp. (strain Marseille) (Minibacterium massiliensis).